We begin with the raw amino-acid sequence, 877 residues long: MNAQVTPMMAQYLEIKAAHPDALLFYRMGDFYEMFFDDAVAAAEALDIALTKRGKHNGEDIAMCGVPAHSAESYLLTLIRKGFRVGICEQMEDPATAKKRGGSKAVVRREVVRLVTPGTLTEDTLLEARRHNYLASYADVRGEGALAWCDISTGDFRVMRCPAVRLGPELARLSPKEVLVSDGLDIARQDAIIELGAAVTPLSPGSFDSASAEQRLAGLFSVSTLEGFGNFARAEVSAMGALIDYLELTQKGALPLLRAPRQQSADRLLQLDTATRRNLELTQALSGGRANSLLSVLDRTQTAGGARLLQRRLTGPSTDLDVIRARHESVSFFFSDTLIRDDLEAELRRIPDLDRALSRLALDRGGPRDLSAIRDGLSGAARLSDKLKIVDLPPLLEGAVQDLQGHDELSALLDEALVAEPPVQLRDGGLIAPGYHAELDEARTLRDEGRSVIATMQADYVEATGVNALKIKHNNVLGYFIETTATHAEKMLNPPLSERFIHRQTTANQVRFTTVELSELETKILNAGNRALEIERVLFQSLRDAILNCQDQIGQAARGLAELDLSAALARRAREGDWTQPEMTEDRAFMIEGARHPVVEAALAKDGTSFVANDCDLSAEGGAAITLLTGPNMAGKSTYLRQNALLVIMAQTGSFVPAKCAKIGLVSQVFSRVGASDDLARGRSTFMVEMVETATILNQADDRALVILDEIGRGTATYDGLSIAWATLEHLHETNQCRALFATHYHEMTSLASKLDGLTNATVAVKEWEGEVIFLHEVREGAADRSYGVQVAKLAGLPDAVIARAQVVLDALEKGEREGGERKAVIDDLPLFAMMPAPAPAPSAPSLVEEKLRAVHPDEMTAREALNLLYELKAELS.

630-637 (GPNMAGKS) lines the ATP pocket.

Belongs to the DNA mismatch repair MutS family.

In terms of biological role, this protein is involved in the repair of mismatches in DNA. It is possible that it carries out the mismatch recognition step. This protein has a weak ATPase activity. In Jannaschia sp. (strain CCS1), this protein is DNA mismatch repair protein MutS.